The sequence spans 214 residues: Ras-related protein Rab2BV (214 aa).

19–26 (GDSGVGKS) provides a ligand contact to GTP. An Effector region motif is present at residues 41-49 (SKSTIGVEF). GTP-binding positions include 67–71 (DTAGQ) and 125–128 (NKSD). 2 S-geranylgeranyl cysteine lipidation sites follow: cysteine 211 and cysteine 212.

Belongs to the small GTPase superfamily. Rab family.

It is found in the cell membrane. This is Ras-related protein Rab2BV (RAB2BV) from Beta vulgaris (Sugar beet).